The chain runs to 756 residues: Neutral ceramidase (756 aa).

Over 1-11 (MAKRTFSTLEA) the chain is Cytoplasmic. The chain crosses the membrane as a helical; Signal-anchor for type II membrane protein span at residues 12–32 (FLIFLLVIMTVITVALLTLLF). Residues 33–756 (VTSGTIENHK…ISSPFEVVTT (724 aa)) are Lumenal-facing. 4 O-linked (GalNAc...) threonine glycosylation sites follow: Thr-56, Thr-57, Thr-58, and Thr-64. Leu-110 contacts Ca(2+). Zn(2+) is bound at residue His-170. N-linked (GlcNAc...) asparagine glycosylation is present at Asn-193. His-279 contacts Zn(2+). Ser-330 serves as the catalytic Nucleophile. 2 disulfide bridges follow: Cys-338/Cys-352 and Cys-345/Cys-360. Residues Asn-407 and Asn-444 are each glycosylated (N-linked (GlcNAc...) asparagine). A disulfide bond links Cys-424 and Cys-474. Zn(2+) contacts are provided by Glu-516 and Tyr-555. Positions 688, 690, and 693 each coordinate Ca(2+). The required for correct folding and localization stretch occupies residues 746 to 756 (GISSPFEVVTT).

Belongs to the neutral ceramidase family. In terms of assembly, may interact with CAV1. Zn(2+) serves as cofactor. In terms of processing, proteolytic cleavage of the N-terminus removes the signal-anchor and produces a soluble form of the protein. N-glycosylated. Required for enzyme activity. Post-translationally, O-glycosylated. Required to retain it as a type II membrane protein at the cell surface. In terms of processing, phosphorylated. May prevent ubiquitination and subsequent degradation. Ubiquitinated, leading to its degradation by the proteasome. Ubiquitination is triggered by nitric oxide. In terms of tissue distribution, widely expressed. Strongly expressed in small intestine and to a lower extent in liver and kidney. Highly expressed in duodenum, jejunum and ileum along the brush border of the small intestine (at protein level).

It localises to the cell membrane. The protein localises to the membrane raft. It is found in the membrane. Its subcellular location is the caveola. The protein resides in the golgi apparatus membrane. It localises to the mitochondrion. The protein localises to the secreted. It is found in the extracellular exosome. It catalyses the reaction an N-acylsphing-4-enine + H2O = sphing-4-enine + a fatty acid. It carries out the reaction N-hexadecanoylsphing-4-enine + H2O = sphing-4-enine + hexadecanoate. The enzyme catalyses N-dodecanoylsphing-4-enine + H2O = dodecanoate + sphing-4-enine. The catalysed reaction is N-octadecanoylsphing-4-enine + H2O = sphing-4-enine + octadecanoate. It catalyses the reaction N-octanoylsphing-4-enine + H2O = octanoate + sphing-4-enine. It carries out the reaction N-(hexanoyl)sphing-4-enine + H2O = hexanoate + sphing-4-enine. The enzyme catalyses N-tetradecanoylsphing-4-enine + H2O = tetradecanoate + sphing-4-enine. The catalysed reaction is N-(9Z-octadecenoyl)-sphing-4-enine + H2O = sphing-4-enine + (9Z)-octadecenoate. It catalyses the reaction N-(15Z-tetracosenoyl)-sphing-4-enine + H2O = (15Z)-tetracosenoate + sphing-4-enine. It carries out the reaction sphinganine + hexadecanoate = N-hexadecanoylsphinganine + H2O. The enzyme catalyses N-(octadecanoyl)-sphinganine + H2O = sphinganine + octadecanoate. The protein operates within lipid metabolism; sphingolipid metabolism. Inhibited by D-erythro-MAPP. In terms of biological role, plasma membrane ceramidase that hydrolyzes sphingolipid ceramides into sphingosine and free fatty acids at neutral pH. Ceramides, sphingosine, and its phosphorylated form sphingosine-1-phosphate are bioactive lipids that mediate cellular signaling pathways regulating several biological processes including cell proliferation, apoptosis and differentiation. Also catalyzes the reverse reaction allowing the synthesis of ceramides from fatty acids and sphingosine. Together with sphingomyelinase, participates in the production of sphingosine and sphingosine-1-phosphate from the degradation of sphingomyelin, a sphingolipid enriched in the plasma membrane of cells. Also participates in the hydrolysis of ceramides from the extracellular milieu allowing the production of sphingosine-1-phosphate inside and outside cells. This is the case for instance with the digestion of dietary sphingolipids in the intestinal tract. The polypeptide is Neutral ceramidase (Asah2) (Mus musculus (Mouse)).